Consider the following 338-residue polypeptide: Large ribosomal subunit protein uL3 (338 aa).

A disordered region spans residues 230 to 253 (HRKGHRRTGTIGPQAPALMFTQPR).

This sequence belongs to the universal ribosomal protein uL3 family. Part of the 50S ribosomal subunit. Forms a cluster with proteins L14 and L24e.

In terms of biological role, one of the primary rRNA binding proteins, it binds directly near the 3'-end of the 23S rRNA, where it nucleates assembly of the 50S subunit. In Pyrobaculum neutrophilum (strain DSM 2338 / JCM 9278 / NBRC 100436 / V24Sta) (Thermoproteus neutrophilus), this protein is Large ribosomal subunit protein uL3.